Consider the following 1085-residue polypeptide: Mitotic checkpoint serine/threonine-protein kinase BUB1 (1085 aa).

Residues 1–146 (MDTPENVLQM…QQQYRLFQTR (146 aa)) form a necessary for kinetochore localization region. A BUB1 N-terminal domain is found at 11–182 (LEAHMQSYKG…TSKSNPGNNM (172 aa)). A Nuclear localization signal motif is present at residues 58–65 (DKKKYHND). The necessary for interaction with KNL1 stretch occupies residues 99–132 (SPLYIAWAGHLEAQGELQHASAVLQRGIQNQAEP). A necessary for interaction with BUB3 region spans residues 229–256 (VDVEQVVMYCKEKLIRGESEFSFEELRA). The disordered stretch occupies residues 305-333 (ETSHEDLPASQERSEVNPARMGPSVGSQQ). Over residues 306-319 (TSHEDLPASQERSE) the composition is skewed to basic and acidic residues. Ser-307, Ser-314, Ser-331, and Ser-375 each carry phosphoserine. The segment at 458–476 (PSPTVHTKEALGFIMNMFQ) is essential for loading of BUBR1, MAD1L1 and MAD2L1 to kinetochores. Position 525 is a phosphoserine (Ser-525). Residues 535–537 (KEN) carry the KEN box 1 motif. The segment at 538-570 (YGLPQPKNKPTGARTFGERSVSRLPSKPKEEVP) is disordered. Residues 553 to 570 (FGERSVSRLPSKPKEEVP) show a composition bias toward basic and acidic residues. Residues Ser-563, Ser-593, and Ser-596 each carry the phosphoserine modification. A Phosphothreonine; by CDK1 modification is found at Thr-609. The KEN box 2 motif lies at 625-627 (KEN). A phosphoserine mark is found at Ser-655, Ser-661, Ser-668, and Ser-672. The region spanning 787–1085 (VYVHHLLGEG…LLLECKRSRK (299 aa)) is the Protein kinase domain. ATP contacts are provided by residues 793–801 (LGEGAFAQV) and Lys-821. The active-site Proton acceptor is Asp-917.

The protein belongs to the protein kinase superfamily. Ser/Thr protein kinase family. BUB1 subfamily. As to quaternary structure, interacts with BUB3 and KNL1. Interacts (when phosphorylated) with PLK1. The BUB1-BUB3 complex interacts with MAD1L1. (Microbial infection) Interacts with SV40 Large T antigen; this interaction induces activation of a DNA damage response and promotes p53/TP53 stabilization and phosphorylation. In terms of assembly, (Microbial infection) Interacts with herpes virus 8 protein LANA1. In terms of processing, upon spindle-assembly checkpoint activation it is hyperphosphorylated and its kinase activity toward CDC20 is stimulated. Phosphorylation at Thr-609 is required for interaction with PLK1, phosphorylation at this site probably creates a binding site for the POLO-box domain of PLK1, thus enhancing the PLK1-BUB1 interaction. Post-translationally, ubiquitinated and degraded during mitotic exit by APC/C-Cdh1. In terms of tissue distribution, high expression in testis and thymus, less in colon, spleen, lung and small intestine. Expressed in fetal thymus, bone marrow, heart, liver, spleen and thymus. Expression is associated with cells/tissues with a high mitotic index.

Its subcellular location is the nucleus. The protein resides in the chromosome. It is found in the centromere. It localises to the kinetochore. It catalyses the reaction L-seryl-[protein] + ATP = O-phospho-L-seryl-[protein] + ADP + H(+). The catalysed reaction is L-threonyl-[protein] + ATP = O-phospho-L-threonyl-[protein] + ADP + H(+). Its activity is regulated as follows. Autophosphorylated when the cells enters mitosis. Functionally, serine/threonine-protein kinase that performs 2 crucial functions during mitosis: it is essential for spindle-assembly checkpoint signaling and for correct chromosome alignment. Has a key role in the assembly of checkpoint proteins at the kinetochore, being required for the subsequent localization of CENPF, BUB1B, CENPE and MAD2L1. Required for the kinetochore localization of PLK1. Required for centromeric enrichment of AUKRB in prometaphase. Plays an important role in defining SGO1 localization and thereby affects sister chromatid cohesion. Promotes the centromeric localization of TOP2A. Acts as a substrate for anaphase-promoting complex or cyclosome (APC/C) in complex with its activator CDH1 (APC/C-Cdh1). Necessary for ensuring proper chromosome segregation and binding to BUB3 is essential for this function. Can regulate chromosome segregation in a kinetochore-independent manner. Can phosphorylate BUB3. The BUB1-BUB3 complex plays a role in the inhibition of APC/C when spindle-assembly checkpoint is activated and inhibits the ubiquitin ligase activity of APC/C by phosphorylating its activator CDC20. This complex can also phosphorylate MAD1L1. Kinase activity is essential for inhibition of APC/CCDC20 and for chromosome alignment but does not play a major role in the spindle-assembly checkpoint activity. Mediates cell death in response to chromosome missegregation and acts to suppress spontaneous tumorigenesis. This is Mitotic checkpoint serine/threonine-protein kinase BUB1 (BUB1) from Homo sapiens (Human).